Reading from the N-terminus, the 145-residue chain is 3-hydroxyacyl-[acyl-carrier-protein] dehydratase FabZ (145 aa).

Histidine 49 is an active-site residue.

It belongs to the thioester dehydratase family. FabZ subfamily.

The protein localises to the cytoplasm. It catalyses the reaction a (3R)-hydroxyacyl-[ACP] = a (2E)-enoyl-[ACP] + H2O. In terms of biological role, involved in unsaturated fatty acids biosynthesis. Catalyzes the dehydration of short chain beta-hydroxyacyl-ACPs and long chain saturated and unsaturated beta-hydroxyacyl-ACPs. In Rickettsia peacockii (strain Rustic), this protein is 3-hydroxyacyl-[acyl-carrier-protein] dehydratase FabZ.